A 144-amino-acid chain; its full sequence is Deoxyuridine 5'-triphosphate nucleotidohydrolase (144 aa).

Residues 63–65, N76, and 80–82 contribute to the substrate site; these read RSG and TID.

It belongs to the dUTPase family. Mg(2+) serves as cofactor.

It catalyses the reaction dUTP + H2O = dUMP + diphosphate + H(+). It functions in the pathway pyrimidine metabolism; dUMP biosynthesis; dUMP from dCTP (dUTP route): step 2/2. Its function is as follows. This enzyme is involved in nucleotide metabolism: it produces dUMP, the immediate precursor of thymidine nucleotides and it decreases the intracellular concentration of dUTP so that uracil cannot be incorporated into DNA. This is Deoxyuridine 5'-triphosphate nucleotidohydrolase from Porphyromonas gingivalis (strain ATCC BAA-308 / W83).